We begin with the raw amino-acid sequence, 95 residues long: FXYD domain-containing ion transport regulator 6 (95 aa).

The signal sequence occupies residues 1–18 (MELVLVFLCSLLAPTVLA). The Extracellular portion of the chain corresponds to 19-35 (SAAEKEKEMDPFHYDYQ). Residues 36 to 58 (TLRIGGLVFAVVLFSVGILLILS) traverse the membrane as a helical segment. The Cytoplasmic segment spans residues 59–95 (RRCKCSFNQKPRAPGDEEAQVENLITANATEPQKAEN).

This sequence belongs to the FXYD family. In terms of assembly, regulatory subunit of the sodium/potassium-transporting ATPase which is composed of a catalytic alpha subunit, a non-catalytic beta subunit and an additional regulatory subunit. The regulatory subunit, a member of the FXYD protein family, modulates the enzymatic activity in a tissue- and isoform-specific way by changing affinities of the Na+/K+-ATPase toward Na(+), K(+) or ATP.

The protein resides in the cell membrane. In terms of biological role, associates with and regulates the activity of the sodium/potassium-transporting ATPase (NKA) which catalyzes the hydrolysis of ATP coupled with the exchange of Na(+) and K(+) ions across the plasma membrane. Reduces the apparent affinity for intracellular Na(+) with no change in the apparent affinity for extracellular K(+). In addition to modulating NKA kinetics, may also function as a regulator of NKA localization to the plasma membrane. The sequence is that of FXYD domain-containing ion transport regulator 6 (FXYD6) from Pongo abelii (Sumatran orangutan).